We begin with the raw amino-acid sequence, 331 residues long: CRISPR-associated endonuclease Cas1 (331 aa).

3 residues coordinate Mn(2+): glutamate 158, histidine 223, and aspartate 238.

Belongs to the CRISPR-associated endonuclease Cas1 family. As to quaternary structure, homodimer, forms a heterotetramer with a Cas2 homodimer. It depends on Mg(2+) as a cofactor. Mn(2+) serves as cofactor.

In terms of biological role, CRISPR (clustered regularly interspaced short palindromic repeat), is an adaptive immune system that provides protection against mobile genetic elements (viruses, transposable elements and conjugative plasmids). CRISPR clusters contain spacers, sequences complementary to antecedent mobile elements, and target invading nucleic acids. CRISPR clusters are transcribed and processed into CRISPR RNA (crRNA). Acts as a dsDNA endonuclease. Involved in the integration of spacer DNA into the CRISPR cassette. Plasmid targeted by CRISPR locus P1 transform wild-type cells very poorly. The sequence is that of CRISPR-associated endonuclease Cas1 from Haloferax volcanii (strain ATCC 29605 / DSM 3757 / JCM 8879 / NBRC 14742 / NCIMB 2012 / VKM B-1768 / DS2) (Halobacterium volcanii).